Reading from the N-terminus, the 353-residue chain is ATPase GET3A (353 aa).

27–34 (KGGVGKTT) is a binding site for ATP. D56 is an active-site residue. E226 and N253 together coordinate ATP. The stretch at 320 to 353 (TTSRSNVEELERKVHTLRLQLKTAEEELERVKSG) forms a coiled coil.

This sequence belongs to the arsA ATPase family. In terms of assembly, homodimer. Interacts with GET1 and GET4.

It is found in the cytoplasm. The protein localises to the cytosol. The protein resides in the endoplasmic reticulum. It catalyses the reaction ATP + H2O = ADP + phosphate + H(+). Functionally, ATPase required for the post-translational delivery of tail-anchored (TA) proteins to the endoplasmic reticulum. Recognizes and selectively binds the transmembrane domain of TA proteins in the cytosol. This complex then targets to the endoplasmic reticulum by membrane-bound receptors, where the tail-anchored protein is released for insertion. This process is regulated by ATP binding and hydrolysis. ATP binding drives the homodimer towards the closed dimer state, facilitating recognition of newly synthesized TA membrane proteins. ATP hydrolysis is required for insertion. Subsequently, the homodimer reverts towards the open dimer state, lowering its affinity for the membrane-bound receptor, and returning it to the cytosol to initiate a new round of targeting. Involved in the control of root hair growth through the regulation of syntaxin SYP123 expression. This chain is ATPase GET3A, found in Arabidopsis thaliana (Mouse-ear cress).